We begin with the raw amino-acid sequence, 497 residues long: Protein DETOXIFICATION 25 (497 aa).

The next 12 membrane-spanning stretches (helical) occupy residues 43-63 (LPST…QAFI), 70-90 (GLAA…GIMA), 121-141 (IVDT…GPIL), 157-177 (IYPW…MQMY), 186-206 (IIGI…WWCV), 216-236 (ALLG…VYVF), 261-281 (LSIS…IIVL), 291-311 (IAIS…NICF), 339-359 (VVLV…LAFG), 381-401 (IVLS…GVAI), 416-436 (SYYA…NFGI), and 438-458 (GLWS…CYVI).

This sequence belongs to the multi antimicrobial extrusion (MATE) (TC 2.A.66.1) family.

Its subcellular location is the membrane. This Arabidopsis thaliana (Mouse-ear cress) protein is Protein DETOXIFICATION 25.